The chain runs to 372 residues: L-selectin (372 aa).

The signal sequence occupies residues 1–28 (MIFPRKCQSTQRDLWNIFKLWGWTMLCC). The propeptide occupies 29–38 (DFLAHHGTDC). Residues 39 to 332 (WTYHYSENPM…FSMIKEGDYN (294 aa)) are Extracellular-facing. The C-type lectin domain maps to 55-155 (RFCRENYTDL…ACHKPKAALC (101 aa)). Intrachain disulfides connect Cys-57–Cys-155, Cys-128–Cys-147, Cys-128–Cys-160, Cys-160–Cys-171, Cys-165–Cys-180, Cys-182–Cys-191, Cys-197–Cys-241, Cys-227–Cys-254, Cys-259–Cys-303, and Cys-289–Cys-316. 2 N-linked (GlcNAc...) asparagine glycosylation sites follow: Asn-60 and Asn-104. Residues Glu-118, Asn-120, Glu-126, Asn-143, and Asp-144 each contribute to the Ca(2+) site. Residues 156 to 192 (YTASCQPWSCSGHGECVEIINNYTCNCDVGYYGPQCQ) form the EGF-like domain. The N-linked (GlcNAc...) asparagine glycan is linked to Asn-177. Sushi domains lie at 195-256 (IQCE…TCQV) and 257-318 (IQCE…ICQK). Asn-226, Asn-232, Asn-246, and Asn-271 each carry an N-linked (GlcNAc...) asparagine glycan. Residues 333–355 (PLFIPVAVIVTAFSGLAFIIWLA) traverse the membrane as a helical segment. Topologically, residues 356–372 (RRLKKGKKSKKSMDDPY) are cytoplasmic.

The protein belongs to the selectin/LECAM family. In terms of assembly, interaction with SELPLG/PSGL1 and PODXL2 is required for promoting recruitment and rolling of leukocytes. This interaction is dependent on the sialyl Lewis X glycan modification of SELPLG and PODXL2, and tyrosine sulfation modifications of SELPLG. Sulfation on 'Tyr-51' of SELPLG is important for L-selectin binding. N-glycosylated.

It localises to the cell membrane. Calcium-dependent lectin that mediates cell adhesion by binding to glycoproteins on neighboring cells. Mediates the adherence of lymphocytes to endothelial cells of high endothelial venules in peripheral lymph nodes. Promotes initial tethering and rolling of leukocytes in endothelia. In Papio hamadryas (Hamadryas baboon), this protein is L-selectin (SELL).